The chain runs to 106 residues: ATP-dependent Clp protease adapter protein ClpS (106 aa).

Residues 1-13 (MPRNTSHEHDHGL) show a composition bias toward basic and acidic residues. Positions 1 to 20 (MPRNTSHEHDHGLMVEASKP) are disordered.

It belongs to the ClpS family. As to quaternary structure, binds to the N-terminal domain of the chaperone ClpA.

Functionally, involved in the modulation of the specificity of the ClpAP-mediated ATP-dependent protein degradation. The polypeptide is ATP-dependent Clp protease adapter protein ClpS (Xanthomonas axonopodis pv. citri (strain 306)).